Consider the following 224-residue polypeptide: N-(5'-phosphoribosyl)anthranilate isomerase (224 aa).

The protein belongs to the TrpF family.

It carries out the reaction N-(5-phospho-beta-D-ribosyl)anthranilate = 1-(2-carboxyphenylamino)-1-deoxy-D-ribulose 5-phosphate. The protein operates within amino-acid biosynthesis; L-tryptophan biosynthesis; L-tryptophan from chorismate: step 3/5. The protein is N-(5'-phosphoribosyl)anthranilate isomerase of Sinorhizobium fredii (strain NBRC 101917 / NGR234).